The following is a 217-amino-acid chain: 7-cyano-7-deazaguanine synthase (217 aa).

10-20 (FSGGQDSTTCL) is an ATP binding site. Residues C185, C194, C197, and C200 each coordinate Zn(2+).

It belongs to the QueC family. As to quaternary structure, homodimer. Zn(2+) is required as a cofactor.

The enzyme catalyses 7-carboxy-7-deazaguanine + NH4(+) + ATP = 7-cyano-7-deazaguanine + ADP + phosphate + H2O + H(+). Its pathway is purine metabolism; 7-cyano-7-deazaguanine biosynthesis. Functionally, catalyzes the ATP-dependent conversion of 7-carboxy-7-deazaguanine (CDG) to 7-cyano-7-deazaguanine (preQ(0)). The sequence is that of 7-cyano-7-deazaguanine synthase from Streptococcus thermophilus (strain ATCC BAA-491 / LMD-9).